Here is a 439-residue protein sequence, read N- to C-terminus: ATP-dependent RNA helicase RhlB (439 aa).

The Q motif signature appears at 9–37; that stretch reads QKFADLPLHPEVKQALAENGFEFCTPIQA. In terms of domain architecture, Helicase ATP-binding spans 40-219; it reads LPVLLQSKDI…YDHMNDPVKV (180 aa). 53–60 contributes to the ATP binding site; the sequence is AQTGTGKT. A DEAD box motif is present at residues 165 to 168; sequence DEAD. Residues 243–390 form the Helicase C-terminal domain; the sequence is KMRLLLTLIE…VSNYDRDALL (148 aa). The disordered stretch occupies residues 395–439; sequence SPVKIHRKHPAGARNLRERSGAGRTPGAHRSGGRPPRHDRTRRQP. Residues 425 to 439 are compositionally biased toward basic residues; the sequence is SGGRPPRHDRTRRQP.

The protein belongs to the DEAD box helicase family. RhlB subfamily. Component of the RNA degradosome, which is a multiprotein complex involved in RNA processing and mRNA degradation.

Its subcellular location is the cytoplasm. The catalysed reaction is ATP + H2O = ADP + phosphate + H(+). In terms of biological role, DEAD-box RNA helicase involved in RNA degradation. Has RNA-dependent ATPase activity and unwinds double-stranded RNA. The sequence is that of ATP-dependent RNA helicase RhlB from Shewanella oneidensis (strain ATCC 700550 / JCM 31522 / CIP 106686 / LMG 19005 / NCIMB 14063 / MR-1).